Consider the following 234-residue polypeptide: Large ribosomal subunit protein uL1 (234 aa).

The protein belongs to the universal ribosomal protein uL1 family. In terms of assembly, part of the 50S ribosomal subunit.

Binds directly to 23S rRNA. The L1 stalk is quite mobile in the ribosome, and is involved in E site tRNA release. Its function is as follows. Protein L1 is also a translational repressor protein, it controls the translation of the L11 operon by binding to its mRNA. This is Large ribosomal subunit protein uL1 from Yersinia enterocolitica serotype O:8 / biotype 1B (strain NCTC 13174 / 8081).